Consider the following 182-residue polypeptide: Urease accessory protein UreE (182 aa).

The segment at 128-182 (PRTEPFRPEGGAYGHGRTLGHDHGPAQGHGHDHPHVHVHISHKPDEDETPDADPA) is disordered. The segment covering 146-162 (LGHDHGPAQGHGHDHPH) has biased composition (basic and acidic residues). Positions 173-182 (EDETPDADPA) are enriched in acidic residues.

The protein belongs to the UreE family.

The protein resides in the cytoplasm. In terms of biological role, involved in urease metallocenter assembly. Binds nickel. Probably functions as a nickel donor during metallocenter assembly. The polypeptide is Urease accessory protein UreE (Cereibacter sphaeroides (strain ATCC 17023 / DSM 158 / JCM 6121 / CCUG 31486 / LMG 2827 / NBRC 12203 / NCIMB 8253 / ATH 2.4.1.) (Rhodobacter sphaeroides)).